The sequence spans 397 residues: 1-deoxy-D-xylulose 5-phosphate reductoisomerase (397 aa).

NADPH is bound by residues Thr-10, Gly-11, Ser-12, Ile-13, Gln-38, and Asn-123. Lys-124 provides a ligand contact to 1-deoxy-D-xylulose 5-phosphate. Glu-125 lines the NADPH pocket. Asp-149 is a binding site for Mn(2+). 4 residues coordinate 1-deoxy-D-xylulose 5-phosphate: Ser-150, Glu-151, Ser-185, and His-208. Position 151 (Glu-151) interacts with Mn(2+). An NADPH-binding site is contributed by Gly-214. The 1-deoxy-D-xylulose 5-phosphate site is built by Ser-221, Asn-226, Lys-227, and Glu-230. Glu-230 is a binding site for Mn(2+).

Belongs to the DXR family. Requires Mg(2+) as cofactor. The cofactor is Mn(2+).

It carries out the reaction 2-C-methyl-D-erythritol 4-phosphate + NADP(+) = 1-deoxy-D-xylulose 5-phosphate + NADPH + H(+). It functions in the pathway isoprenoid biosynthesis; isopentenyl diphosphate biosynthesis via DXP pathway; isopentenyl diphosphate from 1-deoxy-D-xylulose 5-phosphate: step 1/6. Its function is as follows. Catalyzes the NADPH-dependent rearrangement and reduction of 1-deoxy-D-xylulose-5-phosphate (DXP) to 2-C-methyl-D-erythritol 4-phosphate (MEP). This chain is 1-deoxy-D-xylulose 5-phosphate reductoisomerase, found in Idiomarina loihiensis (strain ATCC BAA-735 / DSM 15497 / L2-TR).